The chain runs to 2800 residues: Probable serine/threonine-protein kinase roco5 (2800 aa).

The segment covering 1–61 (MEVIKKEKKD…EKEKDKEKDG (61 aa)) has biased composition (basic and acidic residues). 3 disordered regions span residues 1 to 92 (MEVI…SAQS), 123 to 225 (TTTT…SPVD), and 417 to 437 (GINSANSNNNNNNSGGGSSGI). A compositionally biased stretch (pro residues) spans 77 to 86 (PTPPPPPPPS). Low complexity-rich tracts occupy residues 123 to 134 (TTTTTTTTSSNN) and 143 to 170 (NNNTSNNNINNNNKTSNTTGSNVSSSNN). Residues 176–190 (INVTSLDSGGNNNAS) are compositionally biased toward polar residues. Basic and acidic residues predominate over residues 194–218 (ISNEHSPKNRKEKEKEKDKDNKEDS). The DH domain maps to 227–508 (NRRKLVEGFM…VQVVKDIVNE (282 aa)). Low complexity predominate over residues 417–429 (GINSANSNNNNNN). Residues 540-649 (KFLKEGILIE…WFQVLSQASL (110 aa)) enclose the PH domain. LRR repeat units lie at residues 777-800 (NKSITHLTLSQNSINDPCAVALGD), 805-832 (NHSLIQMDLSENTIADKGLISLIDGILS), 834-856 (PSITVVILTQNQITDTGAKHISK), and 861-885 (NQTLNALFLEDNNITQSMGAEIIDQ). A disordered region spans residues 926–946 (KQLQVNQKSTTPSTSTSTTSS). A compositionally biased stretch (low complexity) spans 934 to 946 (STTPSTSTSTTSS). LRR repeat units lie at residues 971-984 (LNKLNMLSLDSRRI), 985-1007 (SDLKELYLDHNCISSIPVSILKE), 1008-1031 (LKNLQILDLSNNQLSSLPSEISEM), 1033-1056 (ELKLLNVSHNNLSSLPIELGTLCK), 1058-1077 (NHLDISFNFIETINVNSLSQ), 1078-1101 (LVNLKVLMMQRNYFNRLPIEIFTR), 1128-1151 (AIKATKLDLSDCGLSALPIEIGSI), 1152-1174 (SSLIELDLTNNRIKDLPPQIGKL), 1175-1197 (SSLQTLNLSNNAIESLPWQLSQL), and 1199-1222 (TLKVLNITGNPISFDGASNAKISI). A Roc domain is found at 1244–1464 (KEKPCMRMKL…NHIVKLGKAE (221 aa)). GTP-binding positions include 1257 to 1264 (GQENVGKT), 1348 to 1352 (DFAGQ), and 1407 to 1410 (THLD). A COR 1 domain is found at 1473 to 1604 (RSYFQLENLI…KFEIVHPLPD (132 aa)). Disordered stretches follow at residues 1605-1665 (PKAT…SLLN) and 1688-1711 (DQSTSPSNSTTPSPNTSSNNFSDS). 3 stretches are compositionally biased toward low complexity: residues 1610 to 1645 (SSSSSSPSTTQKSLNNSGSNLKSSGSAISTSSSSTT), 1653 to 1665 (RTNSTTNTTSLLN), and 1688 to 1707 (DQSTSPSNSTTPSPNTSSNN). The COR 2 domain maps to 1717–1790 (KSSTKHLVPI…VKEFWKNGLL (74 aa)). Over residues 1886–2008 (SQQQHHQQQQ…LNPDSTSSSN (123 aa)) the composition is skewed to low complexity. Disordered stretches follow at residues 1886–2011 (SQQQ…NETS) and 2050–2070 (RNTNKPKINGTTGSGSSSSIV). The span at 2050–2059 (RNTNKPKING) shows a compositional bias: polar residues. One can recognise a Protein kinase domain in the interval 2175 to 2440 (LEIIEKVGEG…PTFIDIHSRL (266 aa)). ATP is bound by residues 2181 to 2189 (VGEGGFGIV) and lysine 2202. Aspartate 2300 acts as the Proton acceptor in catalysis. 4 stretches are compositionally biased toward low complexity: residues 2452–2490 (TTTNSAKSTISTGFNSNSGATTTTKPKSSTISSGSGTTS), 2583–2654 (LKTP…SPIS), 2669–2685 (TTQTTSTPPTNQTPNPT), and 2694–2704 (SSLSSNSINKP). Disordered stretches follow at residues 2452-2498 (TTTN…HPQL) and 2544-2800 (AGGN…AIPK). Residues 2705 to 2723 (PSKPLPTPGGVTSPPPPPT) show a composition bias toward pro residues. Polar residues predominate over residues 2730-2756 (IKFNSISAGNKTIGQSSTLPSSTLKQF). The span at 2757–2787 (TANNNTSPSGSSSLPNSTVSSPSSSFLLRPT) shows a compositional bias: low complexity.

The protein belongs to the protein kinase superfamily. TKL Ser/Thr protein kinase family. ROCO subfamily.

It carries out the reaction L-seryl-[protein] + ATP = O-phospho-L-seryl-[protein] + ADP + H(+). The catalysed reaction is L-threonyl-[protein] + ATP = O-phospho-L-threonyl-[protein] + ADP + H(+). Functionally, may act as a serine/threonine-protein kinase and guanine-nucleotide releasing factor. This is Probable serine/threonine-protein kinase roco5 (roco5) from Dictyostelium discoideum (Social amoeba).